A 438-amino-acid chain; its full sequence is Anaerobic glycerol-3-phosphate dehydrogenase subunit B (438 aa).

Belongs to the anaerobic G-3-P dehydrogenase subunit B family. As to quaternary structure, composed of a catalytic GlpA/B dimer and of membrane bound GlpC. The cofactor is FMN.

It carries out the reaction a quinone + sn-glycerol 3-phosphate = dihydroxyacetone phosphate + a quinol. It participates in polyol metabolism; glycerol degradation via glycerol kinase pathway; glycerone phosphate from sn-glycerol 3-phosphate (anaerobic route): step 1/1. Functionally, conversion of glycerol 3-phosphate to dihydroxyacetone. Uses fumarate or nitrate as electron acceptor. This is Anaerobic glycerol-3-phosphate dehydrogenase subunit B from Vibrio vulnificus (strain YJ016).